The following is a 237-amino-acid chain: 2',3'-cyclic-nucleotide 3'-phosphodiesterase (237 aa).

The Proton donor/acceptor role is filled by histidine 21. Threonine 23 contributes to the substrate binding site. A disordered region spans residues 117 to 137 (HLYTTDSHGNTVKKKSKQSQD). Histidine 167 serves as the catalytic Proton donor/acceptor. Positions 169 and 172 each coordinate substrate.

This sequence belongs to the 2H phosphoesterase superfamily. CPD1 family.

It localises to the golgi apparatus. It catalyses the reaction a nucleoside 2',3'-cyclic phosphate + H2O = a nucleoside 2'-phosphate + H(+). Involved in the metabolism of ADP-ribose 1',2'-cyclic phosphate which is produced as a consequence of tRNA splicing. In Debaryomyces hansenii (strain ATCC 36239 / CBS 767 / BCRC 21394 / JCM 1990 / NBRC 0083 / IGC 2968) (Yeast), this protein is 2',3'-cyclic-nucleotide 3'-phosphodiesterase (CPD1).